The sequence spans 267 residues: 4-hydroxy-tetrahydrodipicolinate reductase (267 aa).

Residues 12-17, Asp38, 100-102, and 126-129 contribute to the NAD(+) site; these read GARGRM, GTT, and APNF. The Proton donor/acceptor role is filled by His156. His157 contacts (S)-2,3,4,5-tetrahydrodipicolinate. Lys160 (proton donor) is an active-site residue. 166-167 serves as a coordination point for (S)-2,3,4,5-tetrahydrodipicolinate; that stretch reads GT.

The protein belongs to the DapB family.

The protein localises to the cytoplasm. The enzyme catalyses (S)-2,3,4,5-tetrahydrodipicolinate + NAD(+) + H2O = (2S,4S)-4-hydroxy-2,3,4,5-tetrahydrodipicolinate + NADH + H(+). The catalysed reaction is (S)-2,3,4,5-tetrahydrodipicolinate + NADP(+) + H2O = (2S,4S)-4-hydroxy-2,3,4,5-tetrahydrodipicolinate + NADPH + H(+). Its pathway is amino-acid biosynthesis; L-lysine biosynthesis via DAP pathway; (S)-tetrahydrodipicolinate from L-aspartate: step 4/4. Its function is as follows. Catalyzes the conversion of 4-hydroxy-tetrahydrodipicolinate (HTPA) to tetrahydrodipicolinate. In Bacillus pumilus (strain SAFR-032), this protein is 4-hydroxy-tetrahydrodipicolinate reductase.